A 699-amino-acid chain; its full sequence is Elongation factor G (699 aa).

The tr-type G domain maps to 8–283; sequence EHIRNIGICA…AIVDFLPSPI (276 aa). GTP contacts are provided by residues 17–24, 81–85, and 135–138; these read AHIDAGKT, DTPGH, and NKMD.

This sequence belongs to the TRAFAC class translation factor GTPase superfamily. Classic translation factor GTPase family. EF-G/EF-2 subfamily.

The protein localises to the cytoplasm. Its function is as follows. Catalyzes the GTP-dependent ribosomal translocation step during translation elongation. During this step, the ribosome changes from the pre-translocational (PRE) to the post-translocational (POST) state as the newly formed A-site-bound peptidyl-tRNA and P-site-bound deacylated tRNA move to the P and E sites, respectively. Catalyzes the coordinated movement of the two tRNA molecules, the mRNA and conformational changes in the ribosome. The protein is Elongation factor G of Rickettsia typhi (strain ATCC VR-144 / Wilmington).